A 133-amino-acid polypeptide reads, in one-letter code: Large ribosomal subunit protein bL17 (133 aa).

The protein belongs to the bacterial ribosomal protein bL17 family. As to quaternary structure, part of the 50S ribosomal subunit. Contacts protein L32.

The protein is Large ribosomal subunit protein bL17 of Verminephrobacter eiseniae (strain EF01-2).